A 307-amino-acid polypeptide reads, in one-letter code: MTSDLRVSLPGLELKNPIMPASGCFGFGQEYGRYYDLNLLGAFIIKAATKEPRLGNATPRVAETPSGMLNAIGLQNPGIEAIMAEKLPWLAERYPDLPIIANVAGNTEADYVAVCERISQAPNVHAIELNISCPNVAHGGLEFGTSPEAAATLTKACVAVSQVPVYVKLSPNVTDIRPIAKAVEAAGAAGFSLINTLVGMRIDPKTRQPILANQTGGLSGLAIKPVAIRLVHQVRSISNLPIIGMGGVATAGDALELMAAGANAIAVGTANFSEPFACPNIIKALPDELAKYDLHDFKTFAVNQEVL.

FMN is bound by residues Ser-22 and 46 to 47 (KA). Residues Lys-46 and 70–74 (NAIGL) each bind substrate. 2 residues coordinate FMN: Asn-102 and Asn-130. Residue Asn-130 participates in substrate binding. Residue Cys-133 is the Nucleophile of the active site. FMN is bound by residues Lys-168 and Ile-194. Substrate is bound at residue 195-196 (NT). FMN is bound by residues Gly-220, 246-247 (GG), and 268-269 (GT).

This sequence belongs to the dihydroorotate dehydrogenase family. Type 1 subfamily. As to quaternary structure, heterotetramer of 2 PyrK and 2 PyrD type B subunits. FMN is required as a cofactor.

It is found in the cytoplasm. It carries out the reaction (S)-dihydroorotate + NAD(+) = orotate + NADH + H(+). Its pathway is pyrimidine metabolism; UMP biosynthesis via de novo pathway; orotate from (S)-dihydroorotate (NAD(+) route): step 1/1. In terms of biological role, catalyzes the conversion of dihydroorotate to orotate with NAD(+) as electron acceptor. This chain is Dihydroorotate dehydrogenase B (NAD(+)), catalytic subunit (pyrD), found in Latilactobacillus sakei subsp. sakei (strain 23K) (Lactobacillus sakei subsp. sakei).